A 142-amino-acid chain; its full sequence is Large ribosomal subunit protein uL16 (142 aa).

It belongs to the universal ribosomal protein uL16 family. Part of the 50S ribosomal subunit.

In terms of biological role, binds 23S rRNA and is also seen to make contacts with the A and possibly P site tRNAs. The chain is Large ribosomal subunit protein uL16 from Thermotoga neapolitana (strain ATCC 49049 / DSM 4359 / NBRC 107923 / NS-E).